The sequence spans 455 residues: Tubulin alpha-1 chain (455 aa).

Residues glutamine 11, glutamate 75, serine 144, glycine 148, threonine 149, threonine 183, asparagine 210, and asparagine 232 each coordinate GTP. Glutamate 75 contacts Mg(2+). The active site involves glutamate 258.

Belongs to the tubulin family. As to quaternary structure, dimer of alpha and beta chains. A typical microtubule is a hollow water-filled tube with an outer diameter of 25 nm and an inner diameter of 15 nM. Alpha-beta heterodimers associate head-to-tail to form protofilaments running lengthwise along the microtubule wall with the beta-tubulin subunit facing the microtubule plus end conferring a structural polarity. Microtubules usually have 13 protofilaments but different protofilament numbers can be found in some organisms and specialized cells. Mg(2+) serves as cofactor.

The protein resides in the cytoplasm. The protein localises to the cytoskeleton. It catalyses the reaction GTP + H2O = GDP + phosphate + H(+). Tubulin is the major constituent of microtubules, a cylinder consisting of laterally associated linear protofilaments composed of alpha- and beta-tubulin heterodimers. Microtubules grow by the addition of GTP-tubulin dimers to the microtubule end, where a stabilizing cap forms. Below the cap, tubulin dimers are in GDP-bound state, owing to GTPase activity of alpha-tubulin. The chain is Tubulin alpha-1 chain (nda2) from Schizosaccharomyces pombe (strain 972 / ATCC 24843) (Fission yeast).